A 190-amino-acid chain; its full sequence is Thiamine biosynthesis protein X (190 aa).

Positions 1 to 22 (MSISRTVFGIAATAALSAALVA) are cleaved as a signal peptide. Cysteine 23 carries the N-palmitoyl cysteine lipid modification. The S-diacylglycerol cysteine moiety is linked to residue cysteine 23. The segment at 43-68 (SQNPTSASSTSTSSATTTSSAPVEED) is disordered. Residues 47–63 (TSASSTSTSSATTTSSA) are compositionally biased toward low complexity.

The protein resides in the cell membrane. Its function is as follows. Is necessary for biosynthesis of the 4-methyl-5-(beta-hydroxyethyl)thiazol component from which thiamine is formed. This Corynebacterium glutamicum (strain ATCC 13032 / DSM 20300 / JCM 1318 / BCRC 11384 / CCUG 27702 / LMG 3730 / NBRC 12168 / NCIMB 10025 / NRRL B-2784 / 534) protein is Thiamine biosynthesis protein X (thiX).